A 321-amino-acid polypeptide reads, in one-letter code: MSKPIVMERGVKYRDADKMALIPVKNVATEREALLRKPEWMKIKLPADSSRIQGIKAAMRKNGLHSVCEEASCPNLAECFNHGTATFMILGAICTRRCPFCDVAHGRPVAPDANEPQKLAQTIADMGLRYVVVTSVDRDDLRDGGAQHFADCISAIREKNPSIKIETLVPDFRGRMDRALDILTVTPPDVFNHNLENVPRLYRQVRPGADYNWSLKLLERFKEAHPEIPTKSGLMVGLGETNDEIIEVMRDLRRHGVTMLTLGQYLQPSRHHLPVQRYVSPEEFEEMKAEAMAMGFTHAACGPFVRSSYHADLQAKGMEVK.

Residues C68, C73, C79, C94, C98, C101, and S308 each coordinate [4Fe-4S] cluster. The 218-residue stretch at 80–297 (FNHGTATFMI…KAEAMAMGFT (218 aa)) folds into the Radical SAM core domain.

Belongs to the radical SAM superfamily. Lipoyl synthase family. [4Fe-4S] cluster is required as a cofactor.

It localises to the cytoplasm. It carries out the reaction [[Fe-S] cluster scaffold protein carrying a second [4Fe-4S](2+) cluster] + N(6)-octanoyl-L-lysyl-[protein] + 2 oxidized [2Fe-2S]-[ferredoxin] + 2 S-adenosyl-L-methionine + 4 H(+) = [[Fe-S] cluster scaffold protein] + N(6)-[(R)-dihydrolipoyl]-L-lysyl-[protein] + 4 Fe(3+) + 2 hydrogen sulfide + 2 5'-deoxyadenosine + 2 L-methionine + 2 reduced [2Fe-2S]-[ferredoxin]. It participates in protein modification; protein lipoylation via endogenous pathway; protein N(6)-(lipoyl)lysine from octanoyl-[acyl-carrier-protein]: step 2/2. Functionally, catalyzes the radical-mediated insertion of two sulfur atoms into the C-6 and C-8 positions of the octanoyl moiety bound to the lipoyl domains of lipoate-dependent enzymes, thereby converting the octanoylated domains into lipoylated derivatives. The chain is Lipoyl synthase from Klebsiella pneumoniae (strain 342).